Reading from the N-terminus, the 283-residue chain is MTVQTSKNPQVDIAEDNAFFPSEYSLSQYTSPVSDLDGVDYPKPYRGKHKILVIAADERYLPTDNGKLFSTGNHPIETLLPLYHLHAAGFEFEVATISGLMTKFEYWAMPHKDEKVMPFFEQHKSLFRNPKKLADVVASLNADSEYAAIFVPGGHGALIGLPESQDVAAALQWAIKNDRFVISLCHGPAAFLALRHGDNPLNGYSICAFPDAADKQTPEIGYMPGHLTWYFGEELKKMGMNIINDDIAGRVHKDRKVLTGDSPFAANALGKLAAQEMLAAYAG.

Zn(2+) contacts are provided by histidine 86, glutamate 91, and histidine 123. Cysteine 185 functions as the Nucleophile in the catalytic mechanism.

This sequence belongs to the peptidase C56 family. HchA subfamily. In terms of assembly, homodimer.

The protein localises to the cytoplasm. The catalysed reaction is N(omega)-(1-hydroxy-2-oxopropyl)-L-arginyl-[protein] + H2O = lactate + L-arginyl-[protein] + H(+). The enzyme catalyses N(6)-(1-hydroxy-2-oxopropyl)-L-lysyl-[protein] + H2O = lactate + L-lysyl-[protein] + H(+). It carries out the reaction S-(1-hydroxy-2-oxopropyl)-L-cysteinyl-[protein] + H2O = lactate + L-cysteinyl-[protein] + H(+). It catalyses the reaction N(omega)-(1-hydroxy-2-oxoethyl)-L-arginyl-[protein] + H2O = L-arginyl-[protein] + glycolate + H(+). The catalysed reaction is N(6)-(1-hydroxy-2-oxoethyl)-L-lysyl-[protein] + H2O = glycolate + L-lysyl-[protein] + H(+). The enzyme catalyses S-(1-hydroxy-2-oxoethyl)-L-cysteinyl-[protein] + H2O = glycolate + L-cysteinyl-[protein] + H(+). It carries out the reaction N(2)-(1-hydroxy-2-oxopropyl)-dGTP + H2O = lactate + dGTP + H(+). It catalyses the reaction N(2)-(1-hydroxy-2-oxopropyl)-GTP + H2O = lactate + GTP + H(+). The catalysed reaction is N(2)-(1-hydroxy-2-oxopropyl)-GDP + H2O = lactate + GDP + H(+). The enzyme catalyses N(2)-(1-hydroxy-2-oxopropyl)-GMP + H2O = lactate + GMP + H(+). It carries out the reaction N(2)-(1-hydroxy-2-oxoethyl)-dGTP + H2O = dGTP + glycolate + H(+). It catalyses the reaction N(2)-(1-hydroxy-2-oxoethyl)-GTP + H2O = glycolate + GTP + H(+). The catalysed reaction is N(2)-(1-hydroxy-2-oxoethyl)-GDP + H2O = glycolate + GDP + H(+). The enzyme catalyses N(2)-(1-hydroxy-2-oxoethyl)-GMP + H2O = glycolate + GMP + H(+). It carries out the reaction an N(2)-(1-hydroxy-2-oxopropyl)-guanosine in RNA + H2O = a guanosine in RNA + lactate + H(+). It catalyses the reaction an N(2)-(1-hydroxy-2-oxopropyl)-2'-deoxyguanosine in DNA + H2O = a 2'-deoxyguanosine in DNA + lactate + H(+). The catalysed reaction is an N(2)-(1-hydroxy-2-oxoethyl)-guanosine in RNA + H2O = a guanosine in RNA + glycolate + H(+). The enzyme catalyses an N(2)-(1-hydroxy-2-oxoethyl)-2'-deoxyguanosine in DNA + H2O = a 2'-deoxyguanosine in DNA + glycolate + H(+). Its function is as follows. Protein and nucleotide deglycase that catalyzes the deglycation of the Maillard adducts formed between amino groups of proteins or nucleotides and reactive carbonyl groups of glyoxals. Thus, functions as a protein deglycase that repairs methylglyoxal- and glyoxal-glycated proteins, and releases repaired proteins and lactate or glycolate, respectively. Deglycates cysteine, arginine and lysine residues in proteins, and thus reactivates these proteins by reversing glycation by glyoxals. Acts on early glycation intermediates (hemithioacetals and aminocarbinols), preventing the formation of Schiff bases and advanced glycation endproducts (AGE). Also functions as a nucleotide deglycase able to repair glycated guanine in the free nucleotide pool (GTP, GDP, GMP, dGTP) and in DNA and RNA. Is thus involved in a major nucleotide repair system named guanine glycation repair (GG repair), dedicated to reversing methylglyoxal and glyoxal damage via nucleotide sanitization and direct nucleic acid repair. Plays an important role in protecting cells from carbonyl stress. The chain is Protein/nucleic acid deglycase HchA from Escherichia coli O139:H28 (strain E24377A / ETEC).